A 420-amino-acid chain; its full sequence is Adenylosuccinate synthetase (420 aa).

GTP contacts are provided by residues 12–18 and 40–42; these read GDEGKGK and GHT. The Proton acceptor role is filled by D13. Residues D13 and G40 each contribute to the Mg(2+) site. IMP-binding positions include 13 to 16, 38 to 41, T128, R142, Q221, T236, and R299; these read DEGK and NAGH. Catalysis depends on H41, which acts as the Proton donor. 295–301 lines the substrate pocket; that stretch reads ATTGRPR. Residues R301, 327–329, and 399–401 each bind GTP; these read KAD and SYG.

Belongs to the adenylosuccinate synthetase family. Homodimer. Mg(2+) is required as a cofactor.

It localises to the cytoplasm. It catalyses the reaction IMP + L-aspartate + GTP = N(6)-(1,2-dicarboxyethyl)-AMP + GDP + phosphate + 2 H(+). Its pathway is purine metabolism; AMP biosynthesis via de novo pathway; AMP from IMP: step 1/2. In terms of biological role, plays an important role in the de novo pathway of purine nucleotide biosynthesis. Catalyzes the first committed step in the biosynthesis of AMP from IMP. The protein is Adenylosuccinate synthetase of Petrotoga mobilis (strain DSM 10674 / SJ95).